The sequence spans 556 residues: Tripartite motif-containing protein 16 (556 aa).

Residues 1 to 60 form a disordered region; it reads MAELDLIAPGPLTGVTAHPLAPLGPDPVSAIPVEKEDADPLSKSGEETQEQGHDPAELGA. Residues 33–56 are compositionally biased toward basic and acidic residues; that stretch reads VEKEDADPLSKSGEETQEQGHDPA. 2 B box-type zinc fingers span residues 64–113 and 117–156; these read EDQI…LTEP and QDLR…STVS. Ser107 is modified (phosphoserine). 2 coiled-coil regions span residues 163 to 266 and 312 to 332; these read NKEV…RLAA and NLIQ…REEE. Phosphoserine is present on Ser195. Residues 347-545 enclose the B30.2/SPRY domain; the sequence is YRTSKPEPRT…RIVDLGEEPE (199 aa).

Belongs to the TRIM/RBCC family. In terms of assembly, homodimerizes via its coiled-coil domain. Heterodimerizes with MID1, TRIM24 and PML. Interacts with Galectin-3/LGALS3 in a ULK1-dependent manner; this interaction mediates autophagy of damage endomembranes. Interacts with BECN1. Interacts with ATG16L1. Interacts with p62/SQSTM and LC3B/MAP1LC3B. In terms of processing, phosphorylated by ULK1. Post-translationally, auto-ubiquitinates via its B-Boxes. As to expression, widely expressed. Expressed in basal keratinocytes.

The protein localises to the cytoplasm. The enzyme catalyses S-ubiquitinyl-[E2 ubiquitin-conjugating enzyme]-L-cysteine + [acceptor protein]-L-lysine = [E2 ubiquitin-conjugating enzyme]-L-cysteine + N(6)-ubiquitinyl-[acceptor protein]-L-lysine.. In terms of biological role, E3 ubiquitin ligase that plays an essential role in the organization of autophagic response and ubiquitination upon lysosomal and phagosomal damages. Plays a role in the stress-induced biogenesis and degradation of protein aggresomes by regulating the p62-KEAP1-NRF2 signaling and particularly by modulating the ubiquitination levels and thus stability of NRF2. Acts as a scaffold protein and facilitates autophagic degradation of protein aggregates by interacting with p62/SQSTM, ATG16L1 and LC3B/MAP1LC3B. In turn, protects the cell against oxidative stress-induced cell death as a consequence of endomembrane damage. The sequence is that of Tripartite motif-containing protein 16 (Trim16) from Mus musculus (Mouse).